The following is a 344-amino-acid chain: Ferrochelatase (344 aa).

The Fe cation site is built by His-191 and Glu-271.

This sequence belongs to the ferrochelatase family.

The protein resides in the cytoplasm. The catalysed reaction is heme b + 2 H(+) = protoporphyrin IX + Fe(2+). The protein operates within porphyrin-containing compound metabolism; protoheme biosynthesis; protoheme from protoporphyrin-IX: step 1/1. Its function is as follows. Catalyzes the ferrous insertion into protoporphyrin IX. The chain is Ferrochelatase from Pelagibacter ubique (strain HTCC1062).